The chain runs to 60 residues: Large ribosomal subunit protein uL30 (60 aa).

This sequence belongs to the universal ribosomal protein uL30 family. As to quaternary structure, part of the 50S ribosomal subunit.

The protein is Large ribosomal subunit protein uL30 of Burkholderia mallei (strain NCTC 10247).